The sequence spans 417 residues: Phosphoglycerate kinase 1 (417 aa).

N-acetylserine is present on Ser2. Phosphoserine occurs at positions 2 and 4. Lys6 bears the N6-succinyllysine mark. Lys11 carries the N6-acetyllysine modification. Val23, Asp24, Phe25, Asn26, Gln38, and Arg39 together coordinate (2R)-3-phosphoglycerate. A mitochondrial targeting region exposed following cis-trans isomerization by PIN1 and recognized by the TOM complex for mitochondrial translocation of the protein region spans residues 38–43 (QRIKAA). Lys48 is modified (N6-acetyllysine; alternate). Position 48 is an N6-succinyllysine; alternate (Lys48). (2R)-3-phosphoglycerate-binding residues include Ser62, His63, Gly65, and Arg66. Position 75 is an N6-acetyllysine (Lys75). Position 76 is a phosphotyrosine (Tyr76). N6-acetyllysine is present on residues Lys86 and Lys91. At Lys97 the chain carries N6-acetyllysine; alternate. Residue Lys97 is modified to N6-(2-hydroxyisobutyryl)lysine; alternate. (2R)-3-phosphoglycerate-binding residues include Leu122 and Arg123. Lys131 carries the N6-acetyllysine; alternate modification. Position 131 is an N6-malonyllysine; alternate (Lys131). Lys146 is modified (N6-acetyllysine). Residues His170 and Arg171 each coordinate (2R)-3-phosphoglycerate. Residue Lys191 is modified to N6-succinyllysine. The residue at position 196 (Tyr196) is a Phosphotyrosine. The residue at position 199 (Lys199) is an N6-acetyllysine. Ser203 is subject to Phosphoserine. Gly214 is an ADP binding site. Gly214 contributes to the CDP binding site. Residues Ala215 and Lys216 each coordinate AMP. Residue Ala215 coordinates ATP. Ala215 is a Mg(2+) binding site. Lys216 carries the post-translational modification N6-(2-hydroxyisobutyryl)lysine. Residues Ala218 and Asp219 each contribute to the Mg(2+) site. Asp219 is a CDP binding site. An AMP-binding site is contributed by Lys220. An ATP-binding site is contributed by Lys220. An N6-(2-hydroxyisobutyryl)lysine modification is found at Lys220. Position 238 (Gly238) interacts with ADP. Gly238 provides a ligand contact to CDP. Residue Gly239 coordinates AMP. Gly239 is a binding site for ATP. N6-acetyllysine is present on residues Lys267 and Lys291. Gly313 serves as a coordination point for AMP. Gly313 serves as a coordination point for ATP. Lys323 is modified (N6-(2-hydroxyisobutyryl)lysine). 3 residues coordinate CDP: Gly338, Val340, and Phe343. Residue Phe343 coordinates ADP. Glu344 contributes to the AMP binding site. Glu344 serves as a coordination point for ATP. Ser354 bears the Phosphoserine mark. The residue at position 361 (Lys361) is an N6-acetyllysine. ATP-binding residues include Asp375 and Thr376. Residue Asp375 coordinates Mg(2+).

The protein belongs to the phosphoglycerate kinase family. Monomer. Interacts with kinase MAPK1/ERK2; the interaction is direct, occurs under hypoxic conditions, and promotes its interaction with PIN1. Interacts with peptidyl-prolyl cis-trans isomerase PIN1; the interaction is direct, occurs under hypoxic conditions, and targets the protein to the mitochondrion by promoting interactions with the TOM complex. Interacts with mitochondrial circRNA mcPGK1 (via its 2nd stem-loop); the interaction is direct and targets the protein to the mitochondrion by promoting interactions with the TOM complex. Interacts with pyruvate dehydrogenase kinase PDK1; the interaction is direct, occurs under hypoxic conditions and leads to PDK1-mediated inhibition of pyruvate dehydrogenase complex activity. Mg(2+) is required as a cofactor. In terms of processing, phosphorylated at Ser-203 by MAPK1/ERK2 under hypoxic conditions, which promotes its mitochondrial targeting.

Its subcellular location is the cytoplasm. It localises to the cytosol. The protein resides in the mitochondrion matrix. It catalyses the reaction (2R)-3-phosphoglycerate + ATP = (2R)-3-phospho-glyceroyl phosphate + ADP. The catalysed reaction is L-seryl-[protein] + ATP = O-phospho-L-seryl-[protein] + ADP + H(+). It functions in the pathway carbohydrate degradation; glycolysis; pyruvate from D-glyceraldehyde 3-phosphate: step 2/5. In terms of biological role, catalyzes one of the two ATP producing reactions in the glycolytic pathway via the reversible conversion of 1,3-diphosphoglycerate to 3-phosphoglycerate. Both L- and D- forms of purine and pyrimidine nucleotides can be used as substrates, but the activity is much lower on pyrimidines. In addition to its role as a glycolytic enzyme, it seems that PGK-1 acts as a polymerase alpha cofactor protein (primer recognition protein). Acts as a protein kinase when localized to the mitochondrion where it phosphorylates pyruvate dehydrogenase kinase PDK1 to inhibit pyruvate dehydrogenase complex activity and suppress the formation of acetyl-coenzyme A from pyruvate, and consequently inhibit oxidative phosphorylation and promote glycolysis. May play a role in sperm motility. This chain is Phosphoglycerate kinase 1 (Pgk1), found in Rattus norvegicus (Rat).